The chain runs to 431 residues: Isochorismate synthase MenF (431 aa).

The active-site Proton acceptor is the K190. The active-site Proton donor is the E240. The Mg(2+) site is built by E284 and E416.

This sequence belongs to the isochorismate synthase family. Homodimer. It depends on Mg(2+) as a cofactor.

The enzyme catalyses chorismate = isochorismate. It participates in quinol/quinone metabolism; 1,4-dihydroxy-2-naphthoate biosynthesis; 1,4-dihydroxy-2-naphthoate from chorismate: step 1/7. The protein operates within quinol/quinone metabolism; menaquinone biosynthesis. Its function is as follows. Catalyzes the conversion of chorismate to isochorismate. Can also catalyze the reverse reaction, but with a lower efficiency. The polypeptide is Isochorismate synthase MenF (Escherichia coli (strain K12)).